We begin with the raw amino-acid sequence, 118 residues long: Large ribosomal subunit protein eL18 (118 aa).

This sequence belongs to the eukaryotic ribosomal protein eL18 family.

This chain is Large ribosomal subunit protein eL18, found in Nanoarchaeum equitans (strain Kin4-M).